The following is a 395-amino-acid chain: Probable L-tyrosine/L-aspartate decarboxylase (395 aa).

Position 242 is an N6-(pyridoxal phosphate)lysine (lysine 242).

This sequence belongs to the group II decarboxylase family. MfnA subfamily. Requires pyridoxal 5'-phosphate as cofactor.

It carries out the reaction L-tyrosine + H(+) = tyramine + CO2. It catalyses the reaction L-aspartate + H(+) = beta-alanine + CO2. Its pathway is cofactor biosynthesis; methanofuran biosynthesis. It participates in cofactor biosynthesis; coenzyme A biosynthesis. In terms of biological role, catalyzes the decarboxylation of L-tyrosine to produce tyramine for methanofuran biosynthesis. Can also catalyze the decarboxylation of L-aspartate to produce beta-alanine for coenzyme A (CoA) biosynthesis. This Methanosarcina barkeri (strain Fusaro / DSM 804) protein is Probable L-tyrosine/L-aspartate decarboxylase.